Reading from the N-terminus, the 61-residue chain is Large ribosomal subunit protein bL32 (61 aa).

Over residues 1–19 (MAHPKRRQSKTRTAKRRTH) the composition is skewed to basic residues. The disordered stretch occupies residues 1–20 (MAHPKRRQSKTRTAKRRTHD).

Belongs to the bacterial ribosomal protein bL32 family.

The protein is Large ribosomal subunit protein bL32 of Porphyromonas gingivalis (strain ATCC 33277 / DSM 20709 / CIP 103683 / JCM 12257 / NCTC 11834 / 2561).